The following is a 392-amino-acid chain: Formate-dependent phosphoribosylglycinamide formyltransferase (392 aa).

N(1)-(5-phospho-beta-D-ribosyl)glycinamide is bound by residues 22–23 (EL) and glutamate 82. Residues arginine 114, lysine 155, 160-165 (SSGKGQ), 195-198 (EGVV), and glutamate 203 contribute to the ATP site. The ATP-grasp domain maps to 119–308 (RLAAEELGLP…EFALHVRAFL (190 aa)). Residues glutamate 267 and glutamate 279 each contribute to the Mg(2+) site. Residues aspartate 286, lysine 355, and 362–363 (RR) contribute to the N(1)-(5-phospho-beta-D-ribosyl)glycinamide site.

The protein belongs to the PurK/PurT family. Homodimer.

The enzyme catalyses N(1)-(5-phospho-beta-D-ribosyl)glycinamide + formate + ATP = N(2)-formyl-N(1)-(5-phospho-beta-D-ribosyl)glycinamide + ADP + phosphate + H(+). The protein operates within purine metabolism; IMP biosynthesis via de novo pathway; N(2)-formyl-N(1)-(5-phospho-D-ribosyl)glycinamide from N(1)-(5-phospho-D-ribosyl)glycinamide (formate route): step 1/1. Involved in the de novo purine biosynthesis. Catalyzes the transfer of formate to 5-phospho-ribosyl-glycinamide (GAR), producing 5-phospho-ribosyl-N-formylglycinamide (FGAR). Formate is provided by PurU via hydrolysis of 10-formyl-tetrahydrofolate. This is Formate-dependent phosphoribosylglycinamide formyltransferase from Salmonella paratyphi B (strain ATCC BAA-1250 / SPB7).